The chain runs to 1039 residues: RNA-binding protein Unr (1039 aa).

The segment covering 49-62 (TTLGLQPQGQGPSP) has biased composition (polar residues). 2 disordered regions span residues 49 to 126 (TTLG…QQQH) and 165 to 184 (SIFGSQSSNSSAAAADPSQT). Low complexity-rich tracts occupy residues 63-80 (QQQQHQQQQQQQQQQHQQ), 89-126 (QQHMQQQQQQQQHQQQHQQQQHQQQQQHQQQQQQQQQH), and 165-182 (SIFGSQSSNSSAAAADPS). Residues 186 to 250 (RETGIIEKLL…GKPIASQVSK (65 aa)) form the CSD 1 domain. The CSD 2; degenerate domain occupies 261–337 (RVTGTVTTEL…GNLGACHIRL (77 aa)). Residues 345–413 (KYRGVVCSMK…GREFACNITR (69 aa)) form the CSD 3 domain. One can recognise a CSD 4; degenerate domain in the interval 428-503 (VYKGQVLKSL…RDQLQRATSI (76 aa)). A CSD 5 domain is found at 517–585 (REQGTIASLK…SRLQAIRIKH (69 aa)). A CSD 6; degenerate domain is found at 593–673 (FETLVASNIE…KECIAVNVQQ (81 aa)). Residues 721 to 741 (QNGYVMHGSPGGSTSSVGSNN) form a disordered region. Over residues 732 to 741 (GSTSSVGSNN) the composition is skewed to low complexity. The CSD 7 domain maps to 763-831 (VYRGFIAVMK…NCLPAENVRM (69 aa)). A CSD 8; degenerate domain is found at 846-919 (THNGVVARPL…SGRAACVNAV (74 aa)). One can recognise a CSD 9 domain in the interval 922–987 (KKRATVDSIK…GKSSACNVLK (66 aa)).

Belongs to the UNR family. In terms of assembly, interacts with Sxl; cooperates with Sxl to prevent translation of msl-2 transcripts. Interacts with mle; promoting association between mle and roX2 non-coding RNA. Interacts (via CSD domain 7-9) with pAbp; promoting translation inhibition of msl-2 transcripts.

The protein resides in the cytoplasm. RNA-binding protein that acts as a regulator of dosage compensation in both males and females. In males, acts as positive regulator of dosage compensation by promoting assembly of the MSL complex, a multiprotein complex that mediates X-chromosome dosage compensation. Promotes MSL complex assembly via association with roX1 and roX2 non-coding RNA components of the MSL complex, facilitating the interaction between non-coding RNAs and mle. In females, acts as an inhibitor of dosage compensation together with Sxl by preventing production of msl-2 protein, an essential component of the MSL complex. Specifically binds to the 3'-UTR of msl-2 transcripts, and cooperates with Sxl to prevent translation initiation of msl-2 transcripts. Mechanistically, Sxl and Unr inhibit translation initiation by preventing ribosome recruitment after pAbp-mediated recruitment of the eIF4F complex. The protein is RNA-binding protein Unr of Drosophila melanogaster (Fruit fly).